The sequence spans 219 residues: Transmembrane protein 17A (219 aa).

2 N-linked (GlcNAc...) asparagine glycosylation sites follow: Asn18 and Asn27. A run of 4 helical transmembrane segments spans residues 56-76, 83-103, 121-141, and 153-173; these read MMLY…LLML, LPVY…IFEV, LAGF…FFIT, and AVHS…FLAL.

Belongs to the TMEM17 family. In terms of assembly, part of the tectonic-like complex (also named B9 complex).

The protein resides in the cell projection. It is found in the cilium membrane. In terms of biological role, transmembrane component of the tectonic-like complex, a complex localized at the transition zone of primary cilia and acting as a barrier that prevents diffusion of transmembrane proteins between the cilia and plasma membranes. Required for ciliogenesis and sonic hedgehog/SHH signaling. This Danio rerio (Zebrafish) protein is Transmembrane protein 17A (tmem17a).